A 318-amino-acid polypeptide reads, in one-letter code: Ribosomal RNA small subunit methyltransferase H (318 aa).

S-adenosyl-L-methionine contacts are provided by residues 34-36 (GGY), aspartate 52, phenylalanine 79, aspartate 100, and glutamine 107. The tract at residues 286–318 (GPAPDEARANPRARSAKLRAAARTAAPAWETVS) is disordered. Low complexity predominate over residues 303–318 (LRAAARTAAPAWETVS).

This sequence belongs to the methyltransferase superfamily. RsmH family.

Its subcellular location is the cytoplasm. The enzyme catalyses cytidine(1402) in 16S rRNA + S-adenosyl-L-methionine = N(4)-methylcytidine(1402) in 16S rRNA + S-adenosyl-L-homocysteine + H(+). Specifically methylates the N4 position of cytidine in position 1402 (C1402) of 16S rRNA. This is Ribosomal RNA small subunit methyltransferase H from Paramagnetospirillum magneticum (strain ATCC 700264 / AMB-1) (Magnetospirillum magneticum).